A 539-amino-acid polypeptide reads, in one-letter code: MIO-dependent tyrosine 2,3-aminomutase (539 aa).

The active-site Proton donor/acceptor is the tyrosine 63. Histidine 93 lines the substrate pocket. Positions 152 to 154 (ASG) form a cross-link, 5-imidazolinone (Ala-Gly). Serine 153 is subject to 2,3-didehydroalanine (Ser). Substrate is bound by residues asparagine 205 and arginine 311.

This sequence belongs to the TAL/TAM family. As to quaternary structure, homotetramer; dimer of dimers. Post-translationally, contains an active site 4-methylidene-imidazol-5-one (MIO), which is formed autocatalytically by cyclization and dehydration of residues Ala-Ser-Gly.

It carries out the reaction L-tyrosine = 3-amino-3-(4-hydroxyphenyl)propanoate. It catalyses the reaction L-tyrosine = (E)-4-coumarate + NH4(+). Involved in the biosynthesis of the enediyne antitumor antibiotic C-1027. Catalyzes the MIO-dependent deamination of L-tyrosine generating the corresponding alpha,beta-unsaturated acid, (S)-beta-tyrosine. The sequence is that of MIO-dependent tyrosine 2,3-aminomutase from Streptomyces globisporus.